A 182-amino-acid polypeptide reads, in one-letter code: MKIAIFGGSFDPIHIAHKAIVKRALEELEIDKLIIVPTYLNPFKSSFYLEPKVRFELLKKVFEKVEKVEISDYEINQEKLSYSFNTVNYLKDLYKASKIYFILGQDNVENLDKWYKIEELKKMVEFVIATRSGYKSDKLKDFRTLNIDIDVSSTLLRTQIDTKYIPKEIKEDILNLDKGKKN.

This sequence belongs to the NadD family.

It carries out the reaction nicotinate beta-D-ribonucleotide + ATP + H(+) = deamido-NAD(+) + diphosphate. It functions in the pathway cofactor biosynthesis; NAD(+) biosynthesis; deamido-NAD(+) from nicotinate D-ribonucleotide: step 1/1. Functionally, catalyzes the reversible adenylation of nicotinate mononucleotide (NaMN) to nicotinic acid adenine dinucleotide (NaAD). This chain is Probable nicotinate-nucleotide adenylyltransferase, found in Aliarcobacter butzleri (strain RM4018) (Arcobacter butzleri).